The following is an 848-amino-acid chain: Aryl hydrocarbon receptor (848 aa).

A propeptide spanning residues 1 to 9 (MSSGANITY) is cleaved from the precursor. A disordered region spans residues 1 to 38 (MSSGANITYASRKRRKPVQKTVKPIPAEGIKSNPSKRH). Short sequence motifs (nuclear localization signal) lie at residues 12–15 (RKRR) and 36–41 (KRHRDR). Positions 26–79 (PAEGIKSNPSKRHRDRLNTELDRLASLLPFPQDVINKLDKLSVLRLSVSYLRAK) constitute a bHLH domain. The segment at 37 to 65 (RHRDRLNTELDRLASLLPFPQDVINKLDK) is DNA-binding. Required for maintaining the overall integrity of the AHR:ARNT heterodimer and its transcriptional activity stretches follow at residues 49–81 (LASLLPFPQDVINKLDKLSVLRLSVSYLRAKSF), 116–124 (LLQALNGFV), and 260–262 (FAI). Positions 63-71 (LDKLSVLRL) match the Nuclear export signal motif. The PAS 1 domain occupies 116–179 (LLQALNGFVL…RQLHWALNPD (64 aa)). A PAS 2 domain is found at 269-336 (PSILEIRTKN…CAESHIRMIK (68 aa)). The PAC domain maps to 342–380 (MTVFRLFAKHSRWRWVQSNARLIYRNGRPDYIIATQRPL). The segment at 421–449 (LPIRTKSNTSRKDWAPQSTPSKDSFHPSS) is disordered. Positions 436 to 449 (PQSTPSKDSFHPSS) are enriched in polar residues.

In terms of assembly, homodimer. Heterodimer; efficient DNA binding requires dimerization with another bHLH protein. Interacts with ARNT; the heterodimer ARNT:AHR binds to core DNA sequence 5'-TGCGTG-3' within the dioxin response element (DRE) of target gene promoters and activates their transcription. Binds MYBBP1A. Interacts with coactivators including SRC-1, RIP140 and NOCA7, and with the corepressor SMRT. Interacts with NEDD8 and IVNS1ABP. Interacts with BMAL1. Interacts with HSP90AB1. Interacts with TIPARP; leading to mono-ADP-ribosylation of AHR and subsequent inhibition of AHR. Mono-ADP-ribosylated, leading to inhibit transcription activator activity of AHR. As to expression, expressed in all tissues tested including brain, heart, kidney, liver, lung, muscle, ovary, skin, spleen and thymus.

The protein resides in the cytoplasm. It is found in the nucleus. Functionally, ligand-activated transcription factor that enables cells to adapt to changing conditions by sensing compounds from the environment, diet, microbiome and cellular metabolism, and which plays important roles in development, immunity and cancer. Upon ligand binding, translocates into the nucleus, where it heterodimerizes with ARNT and induces transcription by binding to xenobiotic response elements (XRE). Regulates a variety of biological processes, including angiogenesis, hematopoiesis, drug and lipid metabolism, cell motility and immune modulation. Xenobiotics can act as ligands: upon xenobiotic-binding, activates the expression of multiple phase I and II xenobiotic chemical metabolizing enzyme genes (such as the CYP1A1 gene). Mediates biochemical and toxic effects of halogenated aromatic hydrocarbons. Next to xenobiotics, natural ligands derived from plants, microbiota, and endogenous metabolism are potent AHR agonists. Tryptophan (Trp) derivatives constitute an important class of endogenous AHR ligands. Acts as a negative regulator of anti-tumor immunity: indoles and kynurenic acid generated by Trp catabolism act as ligand and activate AHR, thereby promoting AHR-driven cancer cell motility and suppressing adaptive immunity. Regulates the circadian clock by inhibiting the basal and circadian expression of the core circadian component PER1. Inhibits PER1 by repressing the CLOCK-BMAL1 heterodimer mediated transcriptional activation of PER1. The heterodimer ARNT:AHR binds to core DNA sequence 5'-TGCGTG-3' within the dioxin response element (DRE) of target gene promoters and activates their transcription. The chain is Aryl hydrocarbon receptor (Ahr) from Mus musculus (Mouse).